The sequence spans 334 residues: uncharacterized protein (334 aa).

Belongs to the PAPS reductase family.

This is an uncharacterized protein from Escherichia phage 186 (Bacteriophage 186).